Here is a 115-residue protein sequence, read N- to C-terminus: MDLIKAVESEQLKKDITPFNVGDTVRVYYKVIEGDRERIQPFEGIVIKRSGSGLRETFTVRRVSYGVGVERTFPLHSPRLEKIEVIRRGKVRRAKLYYLRKRVGKAATKIKELME.

The protein belongs to the bacterial ribosomal protein bL19 family.

Functionally, this protein is located at the 30S-50S ribosomal subunit interface and may play a role in the structure and function of the aminoacyl-tRNA binding site. The polypeptide is Large ribosomal subunit protein bL19 (Caldanaerobacter subterraneus subsp. tengcongensis (strain DSM 15242 / JCM 11007 / NBRC 100824 / MB4) (Thermoanaerobacter tengcongensis)).